A 798-amino-acid chain; its full sequence is Shutoff protein (798 aa).

Residues 1 to 14 (MESTADGDKARGEE) are compositionally biased toward basic and acidic residues. The tract at residues 1-123 (MESTADGDKA…SHSSDSELGC (123 aa)) is disordered. A compositionally biased stretch (acidic residues) spans 33 to 49 (APEDEHPDDGEPDEPAD). The span at 68–80 (GGRDAECDGEAAR) shows a compositional bias: basic and acidic residues. The span at 86 to 105 (DESSAPTTPSTAVRRSSGES) shows a compositional bias: polar residues. Residues 309 to 376 (LMEVLLQPFA…GRPLYRSARA (68 aa)) form a binding to host EIF4G region. The RRM domain occupies 379–497 (SVFREPSSIK…AIYALETPTE (119 aa)). A Phosphotyrosine; by host modification is found at Tyr711. A disordered region spans residues 740–798 (YADHARGAATSAEPSRALRPTSVATAAGNRTRGCSSARYRLGPTLRRRSNSSWPREWST). Polar residues predominate over residues 789–798 (NSSWPREWST).

This sequence belongs to the adenoviridae shutoff protein family. In terms of assembly, monomer. Interacts with hexon protein; this interaction allows chaperoning and trimerization of hexon proteins. Interacts (via N-terminus) with host initiation factor EIF4G (via C-terminus). Interacts (via RRM domain) with viral mRNAs that contain the tripartite leader; this interaction allows ribosome shunting and expression of viral late mRNAs. In terms of processing, might be cleaved by the viral protease. Phosphorylated. Tyrosine phosphorylation enhances preferential binding to tripartite leader mRNAs and allows ribosome shunting. Post-translationally, methylated. Asymmetric dimethylation by host PRMT1 of the Arg/Gly-rich region may regulate shutoff protein binding to hexon and promote the capsid assembly in the nucleus.

The protein localises to the host cytoplasm. In terms of biological role, protein that inhibits host translation while promoting late viral translation by ribosome shunting. Blocks host cap-dependent translation by binding to eIF4G, displacing MKNK1 from cap initiation complexes and preventing EIF4E phosphorylation. Binds to the tripartite leader sequence of viral late mRNAs and recruits host eIF4G, PABPC1/poly-A binding protein and 40S ribosomes subunits on viral mRNAs, allowing ribosome shunting and efficient translation of late viral mRNAs even though conventional translation via ribosome scanning from the cap has been shut off in the host cell. During assembly, acts as a chaperone protein that helps hexon proteins assembly into trimers. The chain is Shutoff protein from Galliformes (FAdV-10).